The chain runs to 87 residues: Omega-lycotoxin-Am1d (87 aa).

An N-terminal signal peptide occupies residues 1 to 17 (MKLSIFFVLFFIAIAYC). A propeptide spanning residues 18–40 (QPEFLDDEEDEVEETLPVAEEGR) is cleaved from the precursor. Intrachain disulfides connect Cys44/Cys59, Cys51/Cys64, Cys58/Cys84, and Cys66/Cys82.

It belongs to the neurotoxin omega-lctx family. In terms of tissue distribution, expressed by the venom gland.

It is found in the secreted. Functionally, modulates Cav2.1/CACNA1A voltage-gated calcium channels (P/Q-type currents) in rat cerebellar Purkinje cells and hippocampal CA1-CA3 neurons. At saturating concentrations (&gt;10 nM) decelerates activation kinetics and slightly increases peak amplitude without affecting deactivation kinetics. In vivo, does not cause death when intravenously injected into mice. In rat models, through its activity on Cav2.1/CACNA1A, has an ameliorative effect on memory defects provoked by hyperstimulation of N-methyl-D-aspartate receptors (NMDARs) in the hippocampus. In Alopecosa marikovskyi (Wolf spider), this protein is Omega-lycotoxin-Am1d.